We begin with the raw amino-acid sequence, 596 residues long: Transcription factor COE3 (596 aa).

Positions 1 to 22 (MFGIQENIPRGGTTMKEEPLGS) are disordered. The tract at residues 63-66 (RKSN) is interaction with DNA. Residues 151 to 170 (CRVLLTHEIMCSRCCDKKSC) form a C5-type zinc finger. 2 interaction with DNA regions span residues 197–204 (NCLKNAGN) and 236–239 (NNSK). The IPT/TIG domain maps to 263-346 (PCIKAISPSE…KGAPGRFVYT (84 aa)). Residues 451–483 (TSQANDQVGYSRNTSSVSPRGYVPSSTPQQSNY) are disordered.

The protein belongs to the COE family. As to quaternary structure, forms either a homodimer or a heterodimer with a related family member. In terms of tissue distribution, expressed in brain.

It is found in the nucleus. Transcriptional activator. Recognizes variations of the palindromic sequence 5'-ATTCCCNNGGGAATT-3'. The protein is Transcription factor COE3 (EBF3) of Homo sapiens (Human).